Here is a 142-residue protein sequence, read N- to C-terminus: Ribonuclease VapC25 (142 aa).

In terms of domain architecture, PINc spans 3 to 139 (LIDVNVLLAA…ARFASVRHIR (137 aa)). Residues Asp5 and Asp108 each coordinate Mg(2+).

It belongs to the PINc/VapC protein family. Mg(2+) is required as a cofactor.

Functionally, toxic component of a type II toxin-antitoxin (TA) system. An RNase. Upon expression in M.smegmatis inhibits colony formation. Its toxic effect is neutralized by coexpression with cognate antitoxin VapB25. This chain is Ribonuclease VapC25, found in Mycobacterium tuberculosis (strain ATCC 25618 / H37Rv).